Consider the following 180-residue polypeptide: Large ribosomal subunit protein uL5 (180 aa).

It belongs to the universal ribosomal protein uL5 family. In terms of assembly, part of the 50S ribosomal subunit; part of the 5S rRNA/L5/L18/L25 subcomplex. Contacts the 5S rRNA and the P site tRNA. Forms a bridge to the 30S subunit in the 70S ribosome.

This is one of the proteins that bind and probably mediate the attachment of the 5S RNA into the large ribosomal subunit, where it forms part of the central protuberance. In the 70S ribosome it contacts protein S13 of the 30S subunit (bridge B1b), connecting the 2 subunits; this bridge is implicated in subunit movement. Contacts the P site tRNA; the 5S rRNA and some of its associated proteins might help stabilize positioning of ribosome-bound tRNAs. The chain is Large ribosomal subunit protein uL5 from Ralstonia pickettii (strain 12J).